The following is a 314-amino-acid chain: Putative S-adenosyl-L-methionine-dependent methyltransferase MUL_4402 (314 aa).

S-adenosyl-L-methionine is bound by residues Asp132 and 161-162 (DL). Residues 291–314 (RPVPDDAEGPVPPTLFVSAHRPAA) form a disordered region.

Belongs to the UPF0677 family.

Exhibits S-adenosyl-L-methionine-dependent methyltransferase activity. The sequence is that of Putative S-adenosyl-L-methionine-dependent methyltransferase MUL_4402 from Mycobacterium ulcerans (strain Agy99).